A 97-amino-acid polypeptide reads, in one-letter code: Co-chaperonin GroES (97 aa).

Belongs to the GroES chaperonin family. In terms of assembly, heptamer of 7 subunits arranged in a ring. Interacts with the chaperonin GroEL.

The protein localises to the cytoplasm. Its function is as follows. Together with the chaperonin GroEL, plays an essential role in assisting protein folding. The GroEL-GroES system forms a nano-cage that allows encapsulation of the non-native substrate proteins and provides a physical environment optimized to promote and accelerate protein folding. GroES binds to the apical surface of the GroEL ring, thereby capping the opening of the GroEL channel. The chain is Co-chaperonin GroES from Buchnera aphidicola subsp. Geoica urticularia.